Reading from the N-terminus, the 346-residue chain is Probable long-chain-alcohol O-fatty-acyltransferase 6 (346 aa).

Transmembrane regions (helical) follow at residues 7-27 (LFIQ…YLTP), 36-56 (LLSV…FSTV), 59-79 (SFTI…LFAL), 116-136 (FPKW…LQAY), 146-166 (FLLG…LTLI), 228-248 (FFAI…LYFY), 255-275 (TWEV…EVAL), and 289-309 (PAVS…WLFS).

This sequence belongs to the wax synthase family.

It localises to the membrane. The enzyme catalyses a long chain fatty alcohol + a fatty acyl-CoA = a wax ester + CoA. Catalyzes the final step in the synthesis of long-chain linear esters (waxes). This is Probable long-chain-alcohol O-fatty-acyltransferase 6 (AT6) from Arabidopsis thaliana (Mouse-ear cress).